The chain runs to 607 residues: Autophagy-related protein 16-1 (607 aa).

The interval 13 to 43 (WKRHIAEELRRRDRLQRQAFEEIILQYTKLL) is interaction with ATG5. Residues 79–230 (DSQLQEMAQL…QKELAEAAKE (152 aa)) adopt a coiled-coil conformation. Ser-139 bears the Phosphoserine mark. The segment at 207-230 (AENEKDSRRRQARLQKELAEAAKE) is WIPI2-binding. Positions 230–242 (EPLPVEQDDDIEV) are RB1CC1-binding. Residues Ser-269 and Ser-287 each carry the phosphoserine modification. A Caspase cleavage motif is present at residues 296-299 (DIMD). 7 WD repeats span residues 320–359 (AHDG…CEFK), 364–403 (GSNA…LRHT), 406–445 (GHSG…CIKT), 447–484 (FAGS…VVRE), 486–525 (ELLG…VKQT), 532–573 (KCGS…KVLS), and 575–607 (QHSS…WAQP).

This sequence belongs to the WD repeat ATG16 family. Homodimer. Homooligomer. Heterooligomer with ATG16L2. Interacts with WIPI1. Interacts with WIPI2. Interacts with RB1CC1; the interaction is required for ULK1 complex-dependent autophagy. Interacts with ATG5. Part of the minor complex composed of 4 sets of ATG12-ATG5 and ATG16L1 (400 kDa); this complex interacts with ATG3 leading to disruption of ATG7 interaction and promotion of ATG8-like proteins lipidation. Part of the major complex composed of 8 sets of ATG12-ATG5 and ATG16L1 (800 kDa). Interacts with RAB33B (GTP- and GDP-bound forms); the complex consists of a tetramer where two RAB33B molecules bind independently one molecule of the ATG16L1 homodimer; the interaction promotes ATG12-ATG5-ATG16L1 complex recruitment to phagophores. Interacts (via WD repeats) with TMEM59; the interaction mediates unconventional autophagic activity of TMEM59. Interacts with TLR2. Interacts (via WD repeats) with MEFV. Interacts (via N-terminal) with CLTC. Interacts with NOD1. Interacts with NOD2. Interacts with TUFM. Interacts with TRIM16. Interacts (via WD repeats) with SPATA33. Interacts with Irgm1. Proteolytic cleavage by activated CASP3 leads to degradation and may regulate autophagy upon cellular stress and apoptotic stimuli. Post-translationally, phosphorylation at Ser-139 promotes association with the ATG12-ATG5 conjugate to form the ATG12-ATG5-ATG16L1 complex. Widely expressed. Expressed in the testis and sperm midpiece (at protein level). As to expression, expressed in liver. In terms of tissue distribution, highly expressed in liver. Expressed in brain.

It is found in the cytoplasm. It localises to the preautophagosomal structure membrane. The protein localises to the endosome membrane. The protein resides in the lysosome membrane. Its function is as follows. Plays an essential role in both canonical and non-canonical autophagy: interacts with ATG12-ATG5 to mediate the lipidation to ATG8 family proteins (MAP1LC3A, MAP1LC3B, MAP1LC3C, GABARAPL1, GABARAPL2 and GABARAP). Acts as a molecular hub, coordinating autophagy pathways via distinct domains that support either canonical or non-canonical signaling. During canonical autophagy, interacts with ATG12-ATG5 to mediate the conjugation of phosphatidylethanolamine (PE) to ATG8 proteins, to produce a membrane-bound activated form of ATG8. Thereby, controls the elongation of the nascent autophagosomal membrane. As part of the ATG8 conjugation system with ATG5 and ATG12, required for recruitment of LRRK2 to stressed lysosomes and induction of LRRK2 kinase activity in response to lysosomal stress. Also involved in non-canonical autophagy, a parallel pathway involving conjugation of ATG8 proteins to single membranes at endolysosomal compartments, probably by catalyzing conjugation of phosphatidylserine (PS) to ATG8. Non-canonical autophagy plays a key role in epithelial cells to limit lethal infection by influenza A (IAV) virus. Regulates mitochondrial antiviral signaling (MAVS)-dependent type I interferon (IFN-I) production. Negatively regulates NOD1- and NOD2-driven inflammatory cytokine response. Instead, promotes an autophagy-dependent antibacterial pathway together with NOD1 or NOD2. Plays a role in regulating morphology and function of Paneth cell. This is Autophagy-related protein 16-1 from Mus musculus (Mouse).